A 469-amino-acid chain; its full sequence is Protein RUFY3 (469 aa).

2 positions are modified to phosphothreonine: threonine 5 and threonine 12. Phosphoserine occurs at positions 34 and 49. Threonine 51 carries the post-translational modification Phosphothreonine. Positions 95–227 (DSDYAPLQQF…IDANFCMKGE (133 aa)) constitute an RUN domain. Coiled coils occupy residues 271 to 362 (NRHL…VEKE) and 422 to 463 (KSEL…AANK).

In terms of assembly, interacts with PAK1. Interacts (via C-terminus) with Ras-related Rab-5 proteins. Interacts (via C-terminus) with Ras-related Rap-2 proteins. Interacts with PIK3CA and PIK3R1. Interacts (via N-terminus) with FSCN1; this interaction induces neuron axon development. Interacts with DBN1. Interacts (via the second coiled coil) with GTP-, but not GDP-bound ARL8A and ARL8B. Interacts with dynactin/DCTN1 and the dynein intermediate chain DYNC1I1/2. Directly interacts with DYNC1LI1. Post-translationally, isoform 1 is partially phosphorylated. Phosphorylated by PAK1. In terms of tissue distribution, expressed in brain (at protein level).

Its subcellular location is the cytoplasm. The protein localises to the endomembrane system. The protein resides in the cell projection. It localises to the invadopodium. It is found in the growth cone. Its subcellular location is the perikaryon. The protein localises to the filopodium. The protein resides in the lamellipodium. It localises to the lysosome. ARL8 effector that promotes the coupling of endolysosomes to dynein-dynactin for retrograde transport along microtubules. Acts by binding both GTP-bound ARL8 and dynein-dynactin. In nonneuronal cells, promotes concentration of endolysosomes in the juxtanuclear area. In hippocampal neurons, drives retrograde transport of endolysosomes from the axon to the soma. Plays a role in the generation of neuronal polarity formation and axon growth. Implicated in the formation of a single axon by developing neurons. May inhibit the formation of additional axons by inhibition of PI3K in minor neuronal processes. Plays a role in the formation of F-actin-enriched protrusive structures at the cell periphery. Plays a role in cytoskeletal organization by regulating the subcellular localization of FSCN1 and DBN1 at axonal growth cones. The sequence is that of Protein RUFY3 from Rattus norvegicus (Rat).